Reading from the N-terminus, the 162-residue chain is uncharacterized protein (162 aa).

It is found in the cytoplasm. The protein localises to the nucleus. This is an uncharacterized protein from Schizosaccharomyces pombe (strain 972 / ATCC 24843) (Fission yeast).